Reading from the N-terminus, the 1211-residue chain is Transient receptor potential cation channel subfamily A member 1 homolog (1211 aa).

Residues 1–811 (MSKKSLGLDV…LKYKWNRLGR (811 aa)) are Cytoplasmic-facing. ANK repeat units follow at residues 49 to 79 (NLRS…AVNA), 83 to 112 (DFMT…LPNT), 116 to 169 (EGDT…EIDP), 173 to 202 (YQLT…DVDA), 206 to 235 (NKMT…NVTK), 239 to 270 (RLNT…AIKA), 277 to 306 (EKKT…KNSC), 311 to 340 (REKE…NKNE), 344 to 374 (VKAV…NIDV), 378 to 407 (QGLT…NLTI), 411 to 440 (DERT…KKNK), 473 to 502 (DQNT…SITQ), 506 to 535 (DEET…RLLL), 540 to 569 (MGNS…DKEA), 573 to 602 (YQKT…QIES), 605 to 634 (DTKT…TIDR), and 638 to 669 (EGKT…NLMI). A helical transmembrane segment spans residues 812–832 (PMYYFALFMYLVFIVSLTQYV). The Extracellular portion of the chain corresponds to 833–870 (RHTKAPYNVWNEESYYDSEYFDENETCPQINTTKPDVV). N-linked (GlcNAc...) asparagine glycans are attached at residues asparagine 856 and asparagine 863. The helical transmembrane segment at 871 to 891 (WKIIIQTLAVCQILVECFQLF) threads the bilayer. Topologically, residues 892-894 (QRK) are cytoplasmic. The chain crosses the membrane as a helical span at residues 895–915 (FAYLVNWENWIDCFIYSTALI). Residues 916–932 (TVYDFSECSATSGVRQN) lie on the Extracellular side of the membrane. A helical membrane pass occupies residues 933–953 (WQWILAALCIFFGWINLLFMI). Residues 954-975 (RKMPRFGIFVVMFVDIVKTFFR) lie on the Cytoplasmic side of the membrane. A helical transmembrane segment spans residues 976–996 (FFPVFVLFIIAFSSSFYVILQ). Over 997–1004 (NRPEFSTI) the chain is Extracellular. An intramembrane region (pore-forming) is located at residues 1005-1025 (FMSPLKTTVMMIGEFEFTGIF). At 1026–1048 (HGDETTHAEKMFGPAHTAVACAL) the chain is on the extracellular side. Residues 1049-1069 (FFFFCIIMTILLMNLLVGLAV) form a helical membrane-spanning segment. The Cytoplasmic portion of the chain corresponds to 1070–1193 (DDIKGVQEKA…EKQVRLEAII (124 aa)). Residues 1149 to 1191 (EMYEREAEFTSEMTQKLQNQAAKLKNIQENIDVMYEKQVRLEA) are a coiled coil.

This sequence belongs to the transient receptor (TC 1.A.4) family. As to quaternary structure, homotetramer. As to expression, expressed in many sensory neurons, including OLQ and IL1 neurons.

Its subcellular location is the cell membrane. Receptor-activated non-selective cation channel involved in the nose-touch response and foraging behavior. Contributes to the neural responses of sensory neurons to touch, particularly after repeated mechanical stimulation. Has no apparent role in thermosensory or chemosensory behaviors. The protein is Transient receptor potential cation channel subfamily A member 1 homolog (trpa-1) of Caenorhabditis elegans.